A 488-amino-acid chain; its full sequence is Kynurenine 3-monooxygenase 2 (488 aa).

It belongs to the aromatic-ring hydroxylase family. KMO subfamily. It depends on FAD as a cofactor.

It is found in the mitochondrion outer membrane. The enzyme catalyses L-kynurenine + NADPH + O2 + H(+) = 3-hydroxy-L-kynurenine + NADP(+) + H2O. The protein operates within cofactor biosynthesis; NAD(+) biosynthesis; quinolinate from L-kynurenine: step 1/3. Catalyzes the hydroxylation of L-kynurenine (L-Kyn) to form 3-hydroxy-L-kynurenine (L-3OHKyn). Required for synthesis of quinolinic acid. In Aspergillus niger (strain ATCC MYA-4892 / CBS 513.88 / FGSC A1513), this protein is Kynurenine 3-monooxygenase 2 (bna4-2).